Here is a 526-residue protein sequence, read N- to C-terminus: NAD(P)H-quinone oxidoreductase chain 4 1 (526 aa).

A run of 14 helical transmembrane segments spans residues 7–27 (FPWLSALVLLPLLAAFGIPLL), 35–55 (WYALAVGALDLGLMAYIFGWH), 86–106 (LSFPLVLLSGLITTLAIVAAW), 114–134 (LFFFLLLLMYGAQVGVFLAQD), 135–155 (LLLFFLMWEIELVPVYLLIAI), 168–188 (FILYTAAASIFILVGSLAMAF), 208–228 (ALQILAYAAFLIAFGVKLPVF), 242–262 (SAPISMILAGVLLKMGGYGLI), 276–296 (FAPVLAVLGAVNIVYGALAAL), 310–330 (IAHMGFVLIGIAAFTELGLNG), 331–351 (ALLQMISHGLIAAVLFFLTGI), 374–396 (AFALFTAGSLASLALPGMSGFVG), 417–437 (GIALLAAVGIILTPIYLLSML), and 463–483 (MAVALCLLLPILGIGLYPRLA).

The protein belongs to the complex I subunit 4 family.

The protein localises to the cellular thylakoid membrane. It catalyses the reaction a plastoquinone + NADH + (n+1) H(+)(in) = a plastoquinol + NAD(+) + n H(+)(out). The enzyme catalyses a plastoquinone + NADPH + (n+1) H(+)(in) = a plastoquinol + NADP(+) + n H(+)(out). Functionally, NDH-1 shuttles electrons from NAD(P)H, via FMN and iron-sulfur (Fe-S) centers, to quinones in the respiratory chain. The immediate electron acceptor for the enzyme in this species is believed to be plastoquinone. Couples the redox reaction to proton translocation (for every two electrons transferred, four hydrogen ions are translocated across the cytoplasmic membrane), and thus conserves the redox energy in a proton gradient. This is NAD(P)H-quinone oxidoreductase chain 4 1 from Synechococcus sp. (strain JA-3-3Ab) (Cyanobacteria bacterium Yellowstone A-Prime).